The chain runs to 204 residues: Dephospho-CoA kinase (204 aa).

Positions 13 to 204 (RIGLTGGIAS…LWKNTIKKLV (192 aa)) constitute a DPCK domain. 21–26 (ASGKST) is an ATP binding site.

Belongs to the CoaE family.

The protein resides in the cytoplasm. The enzyme catalyses 3'-dephospho-CoA + ATP = ADP + CoA + H(+). It functions in the pathway cofactor biosynthesis; coenzyme A biosynthesis; CoA from (R)-pantothenate: step 5/5. Catalyzes the phosphorylation of the 3'-hydroxyl group of dephosphocoenzyme A to form coenzyme A. The chain is Dephospho-CoA kinase from Prochlorococcus marinus subsp. pastoris (strain CCMP1986 / NIES-2087 / MED4).